We begin with the raw amino-acid sequence, 289 residues long: Glucosamine-6-phosphate deaminase 1 (289 aa).

Lysine 64 bears the N6-acetyllysine mark. The active-site Proton acceptor; for enolization step is aspartate 72. Aspartate 141 serves as the catalytic For ring-opening step. The active-site Proton acceptor; for ring-opening step is the histidine 143. Glutamate 148 (for ring-opening step) is an active-site residue. Phosphothreonine is present on threonine 161.

This sequence belongs to the glucosamine/galactosamine-6-phosphate isomerase family. As to quaternary structure, homohexamer.

The protein resides in the cytoplasm. It carries out the reaction alpha-D-glucosamine 6-phosphate + H2O = beta-D-fructose 6-phosphate + NH4(+). Its pathway is nucleotide-sugar biosynthesis; UDP-N-acetyl-alpha-D-glucosamine biosynthesis; alpha-D-glucosamine 6-phosphate from D-fructose 6-phosphate: step 1/1. With respect to regulation, allosterically activated by N-acetylglucosamine-6-phosphate (GlcNAc6P). In terms of biological role, catalyzes the reversible conversion of alpha-D-glucosamine 6-phosphate (GlcN-6P) into beta-D-fructose 6-phosphate (Fru-6P) and ammonium ion, a regulatory reaction step in de novo uridine diphosphate-N-acetyl-alpha-D-glucosamine (UDP-GlcNAc) biosynthesis via hexosamine pathway. Deamination is coupled to aldo-keto isomerization mediating the metabolic flux from UDP-GlcNAc toward Fru-6P. At high ammonium level can drive amination and isomerization of Fru-6P toward hexosamines and UDP-GlcNAc synthesis. Has a role in fine tuning the metabolic fluctuations of cytosolic UDP-GlcNAc and their effects on hyaluronan synthesis that occur during tissue remodeling. Seems to trigger calcium oscillations in mammalian eggs. These oscillations serve as the essential trigger for egg activation and early development of the embryo. The protein is Glucosamine-6-phosphate deaminase 1 of Pongo abelii (Sumatran orangutan).